Here is a 356-residue protein sequence, read N- to C-terminus: Tyrosine recombinase XerS (356 aa).

One can recognise a Core-binding (CB) domain in the interval 16–121 (LMPWYVLEYY…ALSSLYKYLT (106 aa)). The Tyr recombinase domain occupies 169–354 (EFLEYVDCEY…VNDEQKNALD (186 aa)). Active-site residues include arginine 210, lysine 234, histidine 306, arginine 309, and histidine 332. Catalysis depends on tyrosine 341, which acts as the O-(3'-phospho-DNA)-tyrosine intermediate.

This sequence belongs to the 'phage' integrase family. XerS subfamily.

It localises to the cytoplasm. FtsK is required for recombination. Its function is as follows. Site-specific tyrosine recombinase, which acts by catalyzing the cutting and rejoining of the recombining DNA molecules. Essential to convert dimers of the bacterial chromosome into monomers to permit their segregation at cell division. This is Tyrosine recombinase XerS from Streptococcus mutans serotype c (strain ATCC 700610 / UA159).